The following is a 208-amino-acid chain: MKFLLLLLLAPFISALRFDLKAESKPEQMCIRDFVSEGELVVINIDTDGSLNDGNVLNLYVHDSNGNEYRRLKNFVGEQRIAFTAPATTSFDVCFENTLDSNRGNRNAKRAIELDIESGSQARDWNKISATEKLRPIELELRKIEELTDEIVDELNYLKNREERLRNTNESTNERVRNFSVLVIIVLTSLGAWQVNYLKNYFKSKHII.

Residues 1 to 15 form the signal peptide; it reads MKFLLLLLLAPFISA. Over 16-177 the chain is Lumenal; the sequence is LRFDLKAESK…TNESTNERVR (162 aa). One can recognise a GOLD domain in the interval 28–118; it reads QMCIRDFVSE…KRAIELDIES (91 aa). The chain crosses the membrane as a helical span at residues 178 to 198; it reads NFSVLVIIVLTSLGAWQVNYL. Over 199–208 the chain is Cytoplasmic; that stretch reads KNYFKSKHII.

This sequence belongs to the EMP24/GP25L family.

Its subcellular location is the endoplasmic reticulum membrane. The protein resides in the golgi apparatus membrane. In terms of biological role, constituent of COPII-coated endoplasmic reticulum-derived transport vesicles. Required for efficient transport of a subset of secretory proteins to the Golgi. Facilitates retrograde transport from the Golgi to the endoplasmic reticulum. This Candida glabrata (strain ATCC 2001 / BCRC 20586 / JCM 3761 / NBRC 0622 / NRRL Y-65 / CBS 138) (Yeast) protein is Endoplasmic reticulum vesicle protein 25 (ERV25).